The following is a 358-amino-acid chain: Ion-translocating oxidoreductase complex subunit D (358 aa).

The next 4 membrane-spanning stretches (helical) occupy residues 19 to 39, 41 to 61, 79 to 99, and 125 to 145; these read IMLWVILAMMPAFFTQIYYFG, GVVLQSALAIGTAIIAEFIAI, LTALILAMAIPPYAPYWIIII, and IGYVILLISFPLQMTTWMPPI. Threonine 186 is modified (FMN phosphoryl threonine). A run of 5 helical transmembrane segments spans residues 220-240, 248-268, 271-291, 297-317, and 321-341; these read FAQGWWQINVAFLAGGIFLIL, IPVAMLVTFFCLATATAFTGF, LSAISQLVSGAMMFGAFFIAT, SITPRGKIIFGALVGLFVYLI, and GNYPDGVAFAILLSNICVPLI.

It belongs to the NqrB/RnfD family. The complex is composed of six subunits: RnfA, RnfB, RnfC, RnfD, RnfE and RnfG. The cofactor is FMN.

The protein localises to the cell inner membrane. In terms of biological role, part of a membrane-bound complex that couples electron transfer with translocation of ions across the membrane. The protein is Ion-translocating oxidoreductase complex subunit D of Haemophilus influenzae (strain 86-028NP).